Reading from the N-terminus, the 840-residue chain is Axin-2 (840 aa).

The segment at 1 to 75 (MSSAVLVTLL…EGRASPDSPL (75 aa)) is disordered. A Tankyrase-binding motif motif is present at residues 21–30 (APRPPVPGEE). Over residues 42–55 (KVQSTKPMPVSSNA) the composition is skewed to polar residues. Residues 56 to 69 (RRNEDGLGEPEGRA) are compositionally biased toward basic and acidic residues. An RGS domain is found at 81 to 200 (SLHSLLGDQD…LTSDIYLEYV (120 aa)). Disordered regions lie at residues 300 to 363 (SELS…KEMT), 398 to 435 (IREDEEKEGSEQALSSRDGAPVQHPLALLPSGSYEEDP), 447 to 485 (LKTPGCQSPGVGRYSPRSRSPDHHHQHHHHQQCHTLLPT), 572 to 614 (RGGT…GDRS), and 715 to 745 (ASQQRDRNHSAAGQAGASPFANPSLAPEDHK). The segment covering 303 to 318 (SSDALTDDSMSMTDSS) has biased composition (low complexity). The tract at residues 327-413 (MGSKKQLQRE…KEGSEQALSS (87 aa)) is interaction with GSK3B. The interaction with beta-catenin stretch occupies residues 413–478 (SRDGAPVQHP…HHHQHHHHQQ (66 aa)). Residues 468–478 (DHHHQHHHHQQ) are compositionally biased toward basic residues. Residues 758 to 840 (ASELVVTYFF…RILGKVERID (83 aa)) form the DIX domain.

Interacts with glycogen synthase kinase-3 beta (GSK3B) and beta-catenin. The interaction between axin and beta-catenin occurs via the armadillo repeats contained in beta-catenin. Interacts with SMAD7 and RNF111. Interacts with ANKRD6. Interacts with SIAH1. Interacts with SIAH2. ADP-ribosylated by tankyrase TNKS and TNKS2. Poly-ADP-ribosylated protein is recognized by RNF146, followed by ubiquitination and subsequent activation of the Wnt signaling pathway. In terms of processing, ubiquitinated by RNF146 when poly-ADP-ribosylated, leading to its degradation and subsequent activation of the Wnt signaling pathway. Deubiquitinated by USP34, deubiquitinated downstream of beta-catenin stabilization step: deubiquitination is important Wnt signaling to positively regulate beta-catenin (CTNBB1)-mediated transcription. Post-translationally, probably phosphorylated by GSK3B and dephosphorylated by PP2A. In terms of tissue distribution, expressed in Tcf7-positive innate-like T-cells (at protein level).

It is found in the cytoplasm. Its function is as follows. Inhibitor of the Wnt signaling pathway. Down-regulates beta-catenin. Probably facilitate the phosphorylation of beta-catenin and APC by GSK3B. The chain is Axin-2 from Mus musculus (Mouse).